Consider the following 220-residue polypeptide: uncharacterized protein (220 aa).

This is an uncharacterized protein from Schizosaccharomyces pombe (strain 972 / ATCC 24843) (Fission yeast).